Consider the following 149-residue polypeptide: Probable glycine-rich RNA-binding protein 1 (149 aa).

Residues 8–83 (YRCFVGGLAW…LDGRNITAQA (76 aa)) form the RRM domain. The segment at 80 to 149 (TAQARGSGTR…GRSEGGSWRN (70 aa)) is disordered. 3 stretches are compositionally biased toward gly residues: residues 87-101 (GTRGGMVGGYGSGGY), 110-123 (YNRGGGGGYGGGYG), and 131-143 (YGDGGYGGQGRSE).

The protein belongs to the GR-RBP family.

Possibly has a role in RNA transcription or processing during stress. This Arabidopsis thaliana (Mouse-ear cress) protein is Probable glycine-rich RNA-binding protein 1 (RBG1).